The following is an 88-amino-acid chain: Small ribosomal subunit protein bS20 (88 aa).

The disordered stretch occupies residues 1-21; it reads MANTTSAKKATRKIARRTAVN.

The protein belongs to the bacterial ribosomal protein bS20 family.

Binds directly to 16S ribosomal RNA. This Agrobacterium fabrum (strain C58 / ATCC 33970) (Agrobacterium tumefaciens (strain C58)) protein is Small ribosomal subunit protein bS20.